The primary structure comprises 266 residues: Small ribosomal subunit protein eS1 (266 aa).

A disordered region spans residues 237-266 (DGGSKTGEVGETGSKVDRPEGYEPPVQETV).

This sequence belongs to the eukaryotic ribosomal protein eS1 family. Component of the small ribosomal subunit. Mature ribosomes consist of a small (40S) and a large (60S) subunit. The 40S subunit contains about 33 different proteins and 1 molecule of RNA (18S). The 60S subunit contains about 49 different proteins and 3 molecules of RNA (28S, 5.8S and 5S).

It is found in the cytoplasm. The polypeptide is Small ribosomal subunit protein eS1 (Lysiphlebus testaceipes (Greenbugs aphid parastoid)).